We begin with the raw amino-acid sequence, 134 residues long: Putative F-box protein R638 (134 aa).

The 48-residue stretch at 5–52 folds into the F-box domain; the sequence is NIMNLLNEDCILHILSFLADKDKIQLSLSCKSNLKFLHKTIYDDIYFY.

This is Putative F-box protein R638 from Acanthamoeba polyphaga mimivirus (APMV).